The primary structure comprises 461 residues: Nuclear distribution protein PAC1 (461 aa).

The LisH domain occupies 9–41 (QAEELHKSIIAYLTANNLLDTANTLRAELNLNE). The stretch at 61–88 (TSVVRLQKKIMDLESRMSAMQAELDNAT) forms a coiled coil. 8 WD repeats span residues 114–155 (SHRD…RTIK), 157–197 (HTRA…KNIR), 201–248 (GHDH…CLRT), 251–290 (GHTA…PETK), 312–355 (QYLS…LLTL), 357–396 (GHDN…KCIK), 401–446 (AHER…IRCV), and 448–461 (ATGG…IFAN).

The protein belongs to the WD repeat LIS1/nudF family. Self-associates. Interacts with NDL1 and dynein.

The protein localises to the cytoplasm. It localises to the cytoskeleton. Its subcellular location is the spindle pole. In terms of biological role, positively regulates the activity of the minus-end directed microtubule motor protein dynein. May enhance dynein-mediated microtubule sliding by targeting dynein to the microtubule plus end. Required for nuclear migration during vegetative growth as well as development. Required for retrograde early endosome (EE) transport from the hyphal tip. Required for localization of dynein to the mitotic spindle poles. Recruits additional proteins to the dynein complex at SPBs. The sequence is that of Nuclear distribution protein PAC1 from Arthroderma benhamiae (strain ATCC MYA-4681 / CBS 112371) (Trichophyton mentagrophytes).